Consider the following 127-residue polypeptide: Aspartate 1-decarboxylase (127 aa).

Catalysis depends on serine 25, which acts as the Schiff-base intermediate with substrate; via pyruvic acid. Serine 25 bears the Pyruvic acid (Ser) mark. Threonine 57 serves as a coordination point for substrate. Residue tyrosine 58 is the Proton donor of the active site. Residue glycine 73–alanine 75 participates in substrate binding.

Belongs to the PanD family. In terms of assembly, heterooctamer of four alpha and four beta subunits. It depends on pyruvate as a cofactor. Is synthesized initially as an inactive proenzyme, which is activated by self-cleavage at a specific serine bond to produce a beta-subunit with a hydroxyl group at its C-terminus and an alpha-subunit with a pyruvoyl group at its N-terminus.

It is found in the cytoplasm. The catalysed reaction is L-aspartate + H(+) = beta-alanine + CO2. Its pathway is cofactor biosynthesis; (R)-pantothenate biosynthesis; beta-alanine from L-aspartate: step 1/1. Its function is as follows. Catalyzes the pyruvoyl-dependent decarboxylation of aspartate to produce beta-alanine. The protein is Aspartate 1-decarboxylase of Bacillus subtilis (strain 168).